Reading from the N-terminus, the 400-residue chain is Multiphosphoryl transfer protein (400 aa).

One can recognise a PTS EIIA type-2 domain in the interval 2 to 142 (LELTTQDIQL…QQIIAIIKGE (141 aa)). The active-site Tele-phosphohistidine intermediate; for EIIA activity is the His62. At His62 the chain carries Phosphohistidine; by HPr. In terms of domain architecture, HPr spans 310–400 (AHTATFRIKN…VAINAGLGEG (91 aa)). His324 (pros-phosphohistidine intermediate; for HPr activity) is an active-site residue. The residue at position 324 (His324) is a Phosphohistidine; by EI.

Its subcellular location is the cytoplasm. The phosphoenolpyruvate-dependent sugar phosphotransferase system (sugar PTS), a major carbohydrate active transport system, catalyzes the phosphorylation of incoming sugar substrates concomitantly with their translocation across the cell membrane. The enzyme II FruAB PTS system is involved in fructose transport. The chain is Multiphosphoryl transfer protein from Vibrio cholerae serotype O1 (strain ATCC 39315 / El Tor Inaba N16961).